We begin with the raw amino-acid sequence, 331 residues long: Ketol-acid reductoisomerase (NADP(+)) (331 aa).

The region spanning 2–182 (ARMYYDADAQ…GGTRAGILET (181 aa)) is the KARI N-terminal Rossmann domain. Residues 25-28 (YGSQ), S51, S53, and 83-86 (DEVQ) each bind NADP(+). H108 is an active-site residue. G134 contributes to the NADP(+) binding site. Residues 183–328 (TFREETETDL…QELRSMFSWL (146 aa)) enclose the KARI C-terminal knotted domain. The Mg(2+) site is built by D191, E195, E227, and E231. S252 is a substrate binding site.

It belongs to the ketol-acid reductoisomerase family. The cofactor is Mg(2+).

The catalysed reaction is (2R)-2,3-dihydroxy-3-methylbutanoate + NADP(+) = (2S)-2-acetolactate + NADPH + H(+). It catalyses the reaction (2R,3R)-2,3-dihydroxy-3-methylpentanoate + NADP(+) = (S)-2-ethyl-2-hydroxy-3-oxobutanoate + NADPH + H(+). It participates in amino-acid biosynthesis; L-isoleucine biosynthesis; L-isoleucine from 2-oxobutanoate: step 2/4. The protein operates within amino-acid biosynthesis; L-valine biosynthesis; L-valine from pyruvate: step 2/4. Its function is as follows. Involved in the biosynthesis of branched-chain amino acids (BCAA). Catalyzes an alkyl-migration followed by a ketol-acid reduction of (S)-2-acetolactate (S2AL) to yield (R)-2,3-dihydroxy-isovalerate. In the isomerase reaction, S2AL is rearranged via a Mg-dependent methyl migration to produce 3-hydroxy-3-methyl-2-ketobutyrate (HMKB). In the reductase reaction, this 2-ketoacid undergoes a metal-dependent reduction by NADPH to yield (R)-2,3-dihydroxy-isovalerate. The protein is Ketol-acid reductoisomerase (NADP(+)) of Thermosynechococcus vestitus (strain NIES-2133 / IAM M-273 / BP-1).